We begin with the raw amino-acid sequence, 323 residues long: Fructose-1,6-bisphosphatase class 1 (323 aa).

Mg(2+) contacts are provided by glutamate 88, aspartate 107, leucine 109, and aspartate 110. Substrate contacts are provided by residues 110 to 113 (DGSS) and asparagine 200. Residue glutamate 272 coordinates Mg(2+).

It belongs to the FBPase class 1 family. In terms of assembly, homotetramer. Mg(2+) is required as a cofactor.

It is found in the cytoplasm. It carries out the reaction beta-D-fructose 1,6-bisphosphate + H2O = beta-D-fructose 6-phosphate + phosphate. It participates in carbohydrate biosynthesis; gluconeogenesis. This Acinetobacter baumannii (strain ATCC 17978 / DSM 105126 / CIP 53.77 / LMG 1025 / NCDC KC755 / 5377) protein is Fructose-1,6-bisphosphatase class 1.